Consider the following 776-residue polypeptide: Calcium-independent phospholipase A2-gamma (776 aa).

Residues Asn-4 and Asn-157 are each glycosylated (N-linked (GlcNAc...) asparagine). Disordered regions lie at residues 216-276 (KGKM…HPVS) and 306-334 (KLKS…DKKA). 2 stretches are compositionally biased toward basic and acidic residues: residues 221-239 (QTKE…ERKS) and 247-263 (VADR…KDKL). The region spanning 439–634 (LTIDGGGTRG…LLNNPSALAL (196 aa)) is the PNPLA domain. Residues 443–448 (GGGTRG) carry the GXGXXG motif. Residues 469–489 (LFDYICGVSTGAILAFMLGLF) form a helical membrane-spanning segment. The GXSXG motif lies at 475–479 (GVSTG). The Nucleophile role is filled by Ser-477. Catalysis depends on Asp-621, which acts as the Proton acceptor. Residues 621–623 (DGG) carry the DGA/G motif. Lys-730 bears the N6-succinyllysine mark.

In terms of tissue distribution, expressed in myocardium (at protein level).

The protein resides in the endoplasmic reticulum membrane. It localises to the mitochondrion membrane. It is found in the peroxisome membrane. It carries out the reaction a 1,2-diacyl-sn-glycero-3-phosphocholine + H2O = a 1-acyl-sn-glycero-3-phosphocholine + a fatty acid + H(+). The catalysed reaction is a 1,2-diacyl-sn-glycero-3-phosphocholine + H2O = a 2-acyl-sn-glycero-3-phosphocholine + a fatty acid + H(+). The enzyme catalyses a 1,2-diacyl-sn-glycero-3-phosphoethanolamine + H2O = a 1-acyl-sn-glycero-3-phosphoethanolamine + a fatty acid + H(+). It catalyses the reaction a 1-O-(1Z-alkenyl)-2-acyl-sn-glycero-3-phosphocholine + H2O = a 1-O-(1Z-alkenyl)-sn-glycero-3-phosphocholine + a fatty acid + H(+). It carries out the reaction a 1-acyl-sn-glycero-3-phosphocholine + H2O = sn-glycerol 3-phosphocholine + a fatty acid + H(+). The catalysed reaction is 1-hexadecanoyl-2-(5Z,8Z,11Z,14Z-eicosatetraenoyl)-sn-glycero-3-phosphocholine + H2O = 2-(5Z,8Z,11Z,14Z)-eicosatetraenoyl-sn-glycero-3-phosphocholine + hexadecanoate + H(+). The enzyme catalyses 1-acyl-2-(9Z,12Z)-octadecadienoyl-sn-glycero-3-phosphocholine + H2O = a 1-acyl-sn-glycero-3-phosphocholine + (9Z,12Z)-octadecadienoate + H(+). It catalyses the reaction 1-acyl-2-(5Z,8Z,11Z,14Z-eicosatetraenoyl)-sn-glycero-3-phosphocholine + H2O = a 1-acyl-sn-glycero-3-phosphocholine + (5Z,8Z,11Z,14Z)-eicosatetraenoate + H(+). It carries out the reaction 1-hexadecanoyl-2-(5Z,8Z,11Z,14Z-eicosatetraenoyl)-sn-glycero-3-phosphocholine + H2O = 1-hexadecanoyl-sn-glycero-3-phosphocholine + (5Z,8Z,11Z,14Z)-eicosatetraenoate + H(+). The catalysed reaction is 1-octadecanoyl-2-(9Z-octadecenoyl)-sn-glycero-3-phosphocholine + H2O = 1-octadecanoyl-sn-glycero-3-phosphocholine + (9Z)-octadecenoate + H(+). The enzyme catalyses 1-hexadecanoyl-2-(9Z-octadecenoyl)-sn-glycero-3-phosphocholine + H2O = 1-hexadecanoyl-sn-glycero-3-phosphocholine + (9Z)-octadecenoate + H(+). It catalyses the reaction 1-hexadecanoyl-2-(9Z,12Z-octadecadienoyl)-sn-glycero-3-phosphocholine + H2O = (9Z,12Z)-octadecadienoate + 1-hexadecanoyl-sn-glycero-3-phosphocholine + H(+). It carries out the reaction 1-acyl-2-(9Z,12Z)-octadecadienoyl-sn-glycero-3-phosphoethanolamine + H2O = a 1-acyl-sn-glycero-3-phosphoethanolamine + (9Z,12Z)-octadecadienoate + H(+). The catalysed reaction is 1-acyl-2-(5Z,8Z,11Z,14Z)-eicosatetraenoyl-sn-glycero-3-phosphoethanolamine + H2O = a 1-acyl-sn-glycero-3-phosphoethanolamine + (5Z,8Z,11Z,14Z)-eicosatetraenoate + H(+). The enzyme catalyses 1-hexadecanoyl-2-(5Z,8Z,11Z,14Z-eicosatetraenoyl)-sn-glycero-3-phosphoethanolamine + H2O = 1-hexadecanoyl-sn-glycero-3-phosphoethanolamine + (5Z,8Z,11Z,14Z)-eicosatetraenoate + H(+). It catalyses the reaction 1-octadecanoyl-2-(9Z-octadecenoyl)-sn-glycero-3-phosphocholine + H2O = 2-(9Z-octadecenoyl)-sn-glycero-3-phosphocholine + octadecanoate + H(+). It carries out the reaction 1-hexadecanoyl-2-(4Z,7Z,10Z,13Z,16Z,19Z-docosahexaenoyl)-sn-glycero-3-phosphocholine + H2O = 2-(4Z,7Z,10Z,13Z,16Z,19Z-docosahexaenoyl)-sn-glycero-3-phosphocholine + hexadecanoate + H(+). The catalysed reaction is 1-O-(1Z)-hexadecenyl-2 (5Z,8Z,11Z,14Z)-eicosatetraenoyl-sn-glycero-3-phosphocholine + H2O = 1-(1Z-hexadecenyl)-sn-glycero-3-phosphocholine + (5Z,8Z,11Z,14Z)-eicosatetraenoate + H(+). The enzyme catalyses 1-O-(1Z-hexadecenyl)-2-(9Z-octadecenoyl)-sn-glycero-3-phosphocholine + H2O = 1-(1Z-hexadecenyl)-sn-glycero-3-phosphocholine + (9Z)-octadecenoate + H(+). It catalyses the reaction 1-hexadecanoyl-sn-glycero-3-phosphocholine + H2O = sn-glycerol 3-phosphocholine + hexadecanoate + H(+). It carries out the reaction 1',3'-bis-[1,2-di-(9Z,12Z-octadecadienoyl)-sn-glycero-3-phospho]-glycerol + H2O = 1'-[1,2-di-(9Z,12Z-octadecadienoyl)-sn-glycero-3-phospho]-3'-[1-(9Z,12Z-octadecadienoyl)-sn-glycero-3-phospho]-glycerol + (9Z,12Z)-octadecadienoate + H(+). The catalysed reaction is 1'-[1-acyl-2-(9-hydroxy-(10E,12Z)-octadecadienoyl)-sn-glycero-3-phospho]-3'-[1,2-diacyl-sn-glycero-3-phospho]-glycerol + H2O = 9-hydroxy-(10E,12Z)-octadecadienoate + 1'-[1,2-diacyl-sn-glycero-3-phospho],3'-[1-acyl-sn-glycero-3-phospho]-glycerol + H(+). It functions in the pathway phospholipid metabolism. With respect to regulation, calcium-independent phospholipase. Calcium-independent and membrane-bound phospholipase, that catalyzes the esterolytic cleavage of fatty acids from glycerophospholipids to yield free fatty acids and lysophospholipids, hence regulating membrane physical properties and the release of lipid second messengers and growth factors. Hydrolyzes phosphatidylethanolamine, phosphatidylcholine and probably phosphatidylinositol with a possible preference for the former. Also has a broad substrate specificity in terms of fatty acid moieties, hydrolyzing saturated and mono-unsaturated fatty acids at nearly equal rates from either the sn-1 or sn-2 position in diacyl phosphatidylcholine. However, has a weak activity toward polyunsaturated fatty acids at the sn-2 position, and thereby favors the production of 2-arachidonoyl lysophosphatidylcholine, a key branch point metabolite in eicosanoid signaling. On the other hand, can produce arachidonic acid from the sn-1 position of diacyl phospholipid and from the sn-2 position of arachidonate-containing plasmalogen substrates. Therefore, plays an important role in the mobilization of arachidonic acid in response to cellular stimuli and the generation of lipid second messengers. Can also hydrolyze lysophosphatidylcholine. In the mitochondrial compartment, catalyzes the hydrolysis and release of oxidized aliphatic chains from cardiolipin and integrates mitochondrial bioenergetics and signaling. It is essential for maintaining efficient bioenergetic mitochondrial function through tailoring mitochondrial membrane lipid metabolism and composition. The sequence is that of Calcium-independent phospholipase A2-gamma from Mus musculus (Mouse).